A 168-amino-acid polypeptide reads, in one-letter code: Large ribosomal subunit protein uL10 (168 aa).

The protein belongs to the universal ribosomal protein uL10 family. As to quaternary structure, part of the ribosomal stalk of the 50S ribosomal subunit. The N-terminus interacts with L11 and the large rRNA to form the base of the stalk. The C-terminus forms an elongated spine to which L12 dimers bind in a sequential fashion forming a multimeric L10(L12)X complex.

Forms part of the ribosomal stalk, playing a central role in the interaction of the ribosome with GTP-bound translation factors. The protein is Large ribosomal subunit protein uL10 of Acinetobacter baylyi (strain ATCC 33305 / BD413 / ADP1).